Here is a 131-residue protein sequence, read N- to C-terminus: Small ribosomal subunit protein uS8 (131 aa).

This sequence belongs to the universal ribosomal protein uS8 family. Part of the 30S ribosomal subunit. Contacts proteins S5 and S12.

In terms of biological role, one of the primary rRNA binding proteins, it binds directly to 16S rRNA central domain where it helps coordinate assembly of the platform of the 30S subunit. This chain is Small ribosomal subunit protein uS8, found in Acinetobacter baumannii (strain AB307-0294).